Here is a 360-residue protein sequence, read N- to C-terminus: RNA demethylase ALKBH5 (360 aa).

Residues Met1–Val53 form a disordered region. Positions Asp7–Glu22 are enriched in basic and acidic residues. Residues Asp32–Glu48 show a composition bias toward acidic residues. Residue Tyr107 is part of the active site. The 2-oxoglutarate site is built by Asn161, Tyr163, His172, His234, and Arg245. Cysteines 198 and 235 form a disulfide. Residues Glu261–His360 form a disordered region. The span at Ser264 to Gln280 shows a compositional bias: polar residues. Positions His281 to Arg290 are enriched in basic residues. Composition is skewed to basic and acidic residues over residues Lys291–Arg312 and Tyr330–Thr340.

This sequence belongs to the alkB family. Monomer. It depends on Fe(2+) as a cofactor.

The protein localises to the nucleus speckle. The enzyme catalyses an N(6)-methyladenosine in mRNA + 2-oxoglutarate + O2 = an adenosine in mRNA + formaldehyde + succinate + CO2. Functionally, dioxygenase that specifically demethylates N(6)-methyladenosine (m6A) RNA, the most prevalent internal modification of messenger RNA (mRNA) in higher eukaryotes. Demethylates RNA by oxidative demethylation, which requires molecular oxygen, alpha-ketoglutarate and iron. Demethylation of m6A mRNA affects mRNA processing, translation and export. In Xenopus laevis (African clawed frog), this protein is RNA demethylase ALKBH5 (alkbh5).